The sequence spans 642 residues: Threonine--tRNA ligase (642 aa).

The 61-residue stretch at 1–61 (MPVITLPDGS…DTDSELSIIT (61 aa)) folds into the TGS domain. A catalytic region spans residues 243–534 (DHRKIGKQLD…LIEEYAGKFP (292 aa)). Residues cysteine 334, histidine 385, and histidine 511 each contribute to the Zn(2+) site.

This sequence belongs to the class-II aminoacyl-tRNA synthetase family. Homodimer. The cofactor is Zn(2+).

It localises to the cytoplasm. The enzyme catalyses tRNA(Thr) + L-threonine + ATP = L-threonyl-tRNA(Thr) + AMP + diphosphate + H(+). Catalyzes the attachment of threonine to tRNA(Thr) in a two-step reaction: L-threonine is first activated by ATP to form Thr-AMP and then transferred to the acceptor end of tRNA(Thr). Also edits incorrectly charged L-seryl-tRNA(Thr). The sequence is that of Threonine--tRNA ligase from Shewanella woodyi (strain ATCC 51908 / MS32).